We begin with the raw amino-acid sequence, 283 residues long: Nicotine 6-hydroxylase medium subunit (283 aa).

The FAD-binding PCMH-type domain occupies 1–176 (MKLPAIRYAS…TDVWIPSRPN (176 aa)). Residues 31-35 (AGGQS) and 110-114 (TLGGS) contribute to the FAD site.

As to quaternary structure, heterotrimer composed of a large subunit (NdhL), a medium subunit (NdhM) and a small subunit (NdhS). It depends on FAD as a cofactor.

The protein localises to the cytoplasm. It carries out the reaction (R)-nicotine + A + H2O = (R)-6-hydroxynicotine + AH2. It catalyses the reaction (S)-nicotine + A + H2O = (S)-6-hydroxynicotine + AH2. The protein operates within alkaloid degradation; nicotine degradation; 6-hydroxypseudooxynicotine from nicotine (R-isomer route): step 1/2. Its pathway is alkaloid degradation; nicotine degradation; 6-hydroxypseudooxynicotine from nicotine (S-isomer route): step 1/2. With respect to regulation, nicotine dehydrogenase activity is inhibited by tungsten. In terms of biological role, component of the nicotine 6-hydroxylase, which is involved in the degradation of nicotine. Catalyzes the hydroxylation of the pyridine ring at C6 to form 6-hydroxynicotine. Can use both L-nicotine and D-nicotine. The polypeptide is Nicotine 6-hydroxylase medium subunit (Paenarthrobacter nicotinovorans (Arthrobacter nicotinovorans)).